A 207-amino-acid chain; its full sequence is MANVKLFDQTGKEAGEVVLNDAVFGIEPNESVVFDVIISQRASLRQGTHAVKNRSAVSGGGRKPWRQKGTGRARQGSIRSPQWRGGGIVFGPTPRSYAYKLPRKVRRLALKSVYSEKVAENKFVAVDSLSFTAPKTAEFAKVLAALSIDTKVLVILEEGNEFAALSARNLPNVKVATATTASVLDIVNSDKLLVTQAAISKIEEVLA.

The segment at 49 to 78 is disordered; sequence HAVKNRSAVSGGGRKPWRQKGTGRARQGSI.

Belongs to the universal ribosomal protein uL4 family. In terms of assembly, part of the 50S ribosomal subunit.

Functionally, one of the primary rRNA binding proteins, this protein initially binds near the 5'-end of the 23S rRNA. It is important during the early stages of 50S assembly. It makes multiple contacts with different domains of the 23S rRNA in the assembled 50S subunit and ribosome. Its function is as follows. Forms part of the polypeptide exit tunnel. The chain is Large ribosomal subunit protein uL4 from Streptococcus sanguinis (strain SK36).